Here is a 510-residue protein sequence, read N- to C-terminus: Putative thymidine phosphorylase (510 aa).

Belongs to the thymidine/pyrimidine-nucleoside phosphorylase family. Type 2 subfamily.

It carries out the reaction thymidine + phosphate = 2-deoxy-alpha-D-ribose 1-phosphate + thymine. The polypeptide is Putative thymidine phosphorylase (Nitrobacter hamburgensis (strain DSM 10229 / NCIMB 13809 / X14)).